Reading from the N-terminus, the 51-residue chain is Small ribosomal subunit protein eS31 (51 aa).

Zn(2+) is bound by residues Cys21, Cys24, Cys39, and Cys42. A C4-type zinc finger spans residues 21–42 (CPRCGPGVFLAEHEDRFSCGRC).

Belongs to the eukaryotic ribosomal protein eS31 family. As to quaternary structure, part of the 30S ribosomal subunit. Requires Zn(2+) as cofactor.

The sequence is that of Small ribosomal subunit protein eS31 from Picrophilus torridus (strain ATCC 700027 / DSM 9790 / JCM 10055 / NBRC 100828 / KAW 2/3).